The chain runs to 58 residues: Arabinogalactan protein 21 (58 aa).

An N-terminal signal peptide occupies residues Met1 to Ala24. 4-hydroxyproline is present on residues Pro30, Pro32, and Pro34. O-linked (Ara...) hydroxyproline glycans are attached at residues Pro30, Pro32, and Pro34. Ser36 carries the GPI-anchor amidated serine lipid modification. A propeptide spans Asp37–Phe58 (removed in mature form).

The protein belongs to the AG-peptide AGP family. In terms of processing, contains 4-hydroxyproline; hydroxylated on Pro-30, Pro-32 and Pro-34. Post-translationally, O-glycosylated on hydroxyprolines; noncontiguous hydroxylproline residues are glycosylated with arabinogalactan.

The protein localises to the cell membrane. Its function is as follows. Proteoglycan that seems to be implicated in diverse developmental roles such as differentiation, cell-cell recognition, embryogenesis and programmed cell death. This Arabidopsis thaliana (Mouse-ear cress) protein is Arabinogalactan protein 21.